A 130-amino-acid polypeptide reads, in one-letter code: Small ribosomal subunit protein uS11 (130 aa).

Belongs to the universal ribosomal protein uS11 family. Part of the 30S ribosomal subunit. Interacts with proteins S7 and S18. Binds to IF-3.

Located on the platform of the 30S subunit, it bridges several disparate RNA helices of the 16S rRNA. Forms part of the Shine-Dalgarno cleft in the 70S ribosome. The polypeptide is Small ribosomal subunit protein uS11 (Thermosynechococcus vestitus (strain NIES-2133 / IAM M-273 / BP-1)).